A 311-amino-acid polypeptide reads, in one-letter code: Dermonecrotic toxin (311 aa).

Residues 1–21 form the signal peptide; sequence MYVHLALILGCWTVVLQGAET. Residues 22 to 26 constitute a propeptide that is removed on maturation; it reads DVGER. His-38 is an active-site residue. Residues Glu-58 and Asp-60 each contribute to the Mg(2+) site. Residue His-73 is the Nucleophile of the active site. Cys-77 and Cys-83 are oxidised to a cystine. A Mg(2+)-binding site is contributed by Asp-117.

Belongs to the arthropod phospholipase D family. Class I subfamily. The cofactor is Mg(2+). In terms of tissue distribution, expressed by the venom gland.

Its subcellular location is the secreted. It catalyses the reaction an N-(acyl)-sphingosylphosphocholine = an N-(acyl)-sphingosyl-1,3-cyclic phosphate + choline. The catalysed reaction is an N-(acyl)-sphingosylphosphoethanolamine = an N-(acyl)-sphingosyl-1,3-cyclic phosphate + ethanolamine. It carries out the reaction a 1-acyl-sn-glycero-3-phosphocholine = a 1-acyl-sn-glycero-2,3-cyclic phosphate + choline. The enzyme catalyses a 1-acyl-sn-glycero-3-phosphoethanolamine = a 1-acyl-sn-glycero-2,3-cyclic phosphate + ethanolamine. Catalytic activity and hemolysis are inhibited by divalent ion chelators (1,10-phenanthroline, EDTA, and EGTA). Functionally, dermonecrotic toxins cleave the phosphodiester linkage between the phosphate and headgroup of certain phospholipids (sphingolipid and lysolipid substrates), forming an alcohol (often choline) and a cyclic phosphate. This toxin acts on sphingomyelin (SM). It may also act on ceramide phosphoethanolamine (CPE), lysophosphatidylcholine (LPC) and lysophosphatidylethanolamine (LPE), but not on lysophosphatidylserine (LPS), and lysophosphatidylglycerol (LPG). It acts by transphosphatidylation, releasing exclusively cyclic phosphate products as second products. Shows complement-dependent hemolysis. Also induces dermonecrosis, vascular permeability, edema, inflammatory response, and platelet aggregation. The polypeptide is Dermonecrotic toxin (Loxosceles laeta (South American recluse spider)).